A 339-amino-acid polypeptide reads, in one-letter code: 2,3,4,5-tetrahydropyridine-2,6-dicarboxylate N-succinyltransferase (339 aa).

D180 serves as a coordination point for Mg(2+). The active-site Acyl-anhydride intermediate is the E213. Succinyl-CoA contacts are provided by residues R215, G230, S233, A256, 271-272 (EA), G279, and K300.

Belongs to the type 2 tetrahydrodipicolinate N-succinyltransferase family. As to quaternary structure, homotrimer.

The protein resides in the cytoplasm. It carries out the reaction (S)-2,3,4,5-tetrahydrodipicolinate + succinyl-CoA + H2O = (S)-2-succinylamino-6-oxoheptanedioate + CoA. Its pathway is amino-acid biosynthesis; L-lysine biosynthesis via DAP pathway; LL-2,6-diaminopimelate from (S)-tetrahydrodipicolinate (succinylase route): step 1/3. Its function is as follows. Catalyzes the conversion of the cyclic tetrahydrodipicolinate (THDP) into the acyclic N-succinyl-L-2-amino-6-oxopimelate using succinyl-CoA. In Bifidobacterium longum (strain NCC 2705), this protein is 2,3,4,5-tetrahydropyridine-2,6-dicarboxylate N-succinyltransferase.